Reading from the N-terminus, the 101-residue chain is Urease subunit beta (101 aa).

This sequence belongs to the urease beta subunit family. Heterotrimer of UreA (gamma), UreB (beta) and UreC (alpha) subunits. Three heterotrimers associate to form the active enzyme.

The protein resides in the cytoplasm. It carries out the reaction urea + 2 H2O + H(+) = hydrogencarbonate + 2 NH4(+). It participates in nitrogen metabolism; urea degradation; CO(2) and NH(3) from urea (urease route): step 1/1. This is Urease subunit beta from Chelativorans sp. (strain BNC1).